Consider the following 336-residue polypeptide: Ribosomal RNA large subunit methyltransferase F (336 aa).

Residues His212 to Ser231 are compositionally biased toward basic residues. Residues His212 to Met234 form a disordered region.

The protein belongs to the methyltransferase superfamily. METTL16/RlmF family.

The protein resides in the cytoplasm. It carries out the reaction adenosine(1618) in 23S rRNA + S-adenosyl-L-methionine = N(6)-methyladenosine(1618) in 23S rRNA + S-adenosyl-L-homocysteine + H(+). Functionally, specifically methylates the adenine in position 1618 of 23S rRNA. This Methylobacillus flagellatus (strain ATCC 51484 / DSM 6875 / VKM B-1610 / KT) protein is Ribosomal RNA large subunit methyltransferase F.